We begin with the raw amino-acid sequence, 493 residues long: Lysine--tRNA ligase (493 aa).

Residues Glu-402 and Glu-409 each coordinate Mg(2+).

It belongs to the class-II aminoacyl-tRNA synthetase family. In terms of assembly, homodimer. Mg(2+) serves as cofactor.

It localises to the cytoplasm. It catalyses the reaction tRNA(Lys) + L-lysine + ATP = L-lysyl-tRNA(Lys) + AMP + diphosphate. This chain is Lysine--tRNA ligase, found in Ureaplasma parvum serovar 3 (strain ATCC 27815 / 27 / NCTC 11736).